The following is a 154-amino-acid chain: Superoxide dismutase [Cu-Zn] (154 aa).

Residues histidine 45, histidine 47, and histidine 62 each contribute to the Cu cation site. Cysteine 56 and cysteine 146 are oxidised to a cystine. 4 residues coordinate Zn(2+): histidine 62, histidine 70, histidine 79, and aspartate 82. Histidine 120 contacts Cu cation.

It belongs to the Cu-Zn superoxide dismutase family. In terms of assembly, homodimer. Cu cation is required as a cofactor. It depends on Zn(2+) as a cofactor.

Its subcellular location is the cytoplasm. The enzyme catalyses 2 superoxide + 2 H(+) = H2O2 + O2. Its function is as follows. Destroys radicals which are normally produced within the cells and which are toxic to biological systems. This chain is Superoxide dismutase [Cu-Zn], found in Bombyx mori (Silk moth).